Consider the following 343-residue polypeptide: tRNA N6-adenosine threonylcarbamoyltransferase (343 aa).

Fe cation-binding residues include H111 and H115. Substrate-binding positions include 134 to 138 (LVSGG), D167, G180, and N276. D304 contributes to the Fe cation binding site.

Belongs to the KAE1 / TsaD family. The cofactor is Fe(2+).

The protein resides in the cytoplasm. It catalyses the reaction L-threonylcarbamoyladenylate + adenosine(37) in tRNA = N(6)-L-threonylcarbamoyladenosine(37) in tRNA + AMP + H(+). Functionally, required for the formation of a threonylcarbamoyl group on adenosine at position 37 (t(6)A37) in tRNAs that read codons beginning with adenine. Is involved in the transfer of the threonylcarbamoyl moiety of threonylcarbamoyl-AMP (TC-AMP) to the N6 group of A37, together with TsaE and TsaB. TsaD likely plays a direct catalytic role in this reaction. The protein is tRNA N6-adenosine threonylcarbamoyltransferase of Chromohalobacter salexigens (strain ATCC BAA-138 / DSM 3043 / CIP 106854 / NCIMB 13768 / 1H11).